Consider the following 218-residue polypeptide: Putative copper transporter crmD (218 aa).

The next 2 membrane-spanning stretches (helical) occupy residues 37–57 and 176–196; these read YSLT…LGVL and MLAV…GIVV.

It belongs to the copper transporter (Ctr) (TC 1.A.56) family. SLC31A subfamily.

Its subcellular location is the membrane. The enzyme catalyses Cu(2+)(in) = Cu(2+)(out). Functionally, putative copper transporter; part of the crm gene cluster that mediates the biosynthesis of a yet unidentified copper-responsive metabolite. Probably involved in the transport of copper, even if it does not act as a major copper transporter. In contrast to crmA, is not involved in the biosynthesis of fumivalines or fumicicolins. The chain is Putative copper transporter crmD from Aspergillus fumigatus (strain ATCC MYA-4609 / CBS 101355 / FGSC A1100 / Af293) (Neosartorya fumigata).